The primary structure comprises 2230 residues: Probable serine/threonine-protein kinase DDB_G0267686 (2230 aa).

Residues 1–12 are compositionally biased toward low complexity; it reads MEPNNNISNSNN. Disordered stretches follow at residues 1-22, 121-152, 270-352, 368-397, 430-451, 464-574, 593-620, 699-849, and 915-974; these read MEPN…GDGK, NNNS…QLNN, DEKE…DKIS, PIIN…RLSS, NGAS…ILST, KNSS…NSPS, GSGS…NSST, QHQQ…LLPS, and SNQI…SSNS. Basic and acidic residues predominate over residues 270–336; sequence DEKENKEGGQ…NENEKNHNDK (67 aa). Residues 337-346 show a composition bias toward acidic residues; that stretch reads NDDDDDDEDN. 6 stretches are compositionally biased toward low complexity: residues 375 to 388, 430 to 447, 473 to 574, 593 to 602, 610 to 619, and 699 to 721; these read SSSN…NNSI, NGAS…GPTP, NNNN…NSPS, GSGSSSLGKG, SYSNNNNNSS, and QHQQ…QQQL. A compositionally biased stretch (polar residues) spans 722–731; that stretch reads KSRSNTTNTP. Over residues 745-754 the composition is skewed to pro residues; that stretch reads NSPPVSPPSS. Low complexity-rich tracts occupy residues 755 to 766 and 783 to 818; these read PMLSPLSSSPPS and TGSL…RSNS. Residues 840–849 are compositionally biased toward polar residues; that stretch reads YNTTPPLLPS. An RGS domain is found at 991 to 1119; sequence SLSALMKDRI…CILHSTTNGT (129 aa). 8 disordered regions span residues 1146 to 1181, 1220 to 1243, 1300 to 1362, 1506 to 1546, 1563 to 1611, 1725 to 1771, 1802 to 1848, and 1905 to 1929; these read SKET…INNN, KLSH…NQPL, LSPP…GDQT, QQQQ…QPQQ, PTIP…NNNS, VSNN…NNGN, NNLM…NNNH, and ENNT…TISQ. Low complexity-rich tracts occupy residues 1149–1181 and 1222–1239; these read TSNS…INNN and SHSN…SYTS. The segment covering 1324 to 1353 has biased composition (polar residues); that stretch reads TNGSMKSSLFQQQLQPTGSINSSPINNHQV. 2 stretches are compositionally biased toward low complexity: residues 1506 to 1520 and 1530 to 1546; these read QQQQ…QFQP and PSSN…QPQQ. Over residues 1726-1769 the composition is skewed to low complexity; sequence SNNNNINSNNNNNNNNNNNNNNNNNNNNNNNNNNNNNNNSNNNN. Over residues 1905 to 1915 the composition is skewed to low complexity; it reads ENNTTTTTTTT. The span at 1916 to 1929 shows a compositional bias: polar residues; the sequence is SNRPFRSNNPTISQ. The Protein kinase domain maps to 1949–2208; it reads IVFLNKLGEG…SCPEILDSLL (260 aa). ATP contacts are provided by residues 1955–1963 and K1976; that span reads LGEGTSAKV. D2069 functions as the Proton acceptor in the catalytic mechanism.

Belongs to the protein kinase superfamily. TKL Ser/Thr protein kinase family.

The enzyme catalyses L-seryl-[protein] + ATP = O-phospho-L-seryl-[protein] + ADP + H(+). The catalysed reaction is L-threonyl-[protein] + ATP = O-phospho-L-threonyl-[protein] + ADP + H(+). The protein is Probable serine/threonine-protein kinase DDB_G0267686 of Dictyostelium discoideum (Social amoeba).